Reading from the N-terminus, the 109-residue chain is Aquaporin-2 (109 aa).

Residues 1 to 6 (SIAFSR) lie on the Cytoplasmic side of the membrane. A helical transmembrane segment spans residues 7–27 (AVFSEFLATLLFVFFGLGSAL). At 28–35 (NWPQALPS) the chain is on the extracellular side. A helical transmembrane segment spans residues 36 to 54 (VLQIAMAFGLAIGTLVQTL). Topologically, residues 55-59 (GHISG) are cytoplasmic. The segment at residues 60–69 (AHINPAVTVA) is an intramembrane region (discontinuously helical). The short motif at 63-65 (NPA) is the NPA 1 element. Over 70–80 (CLVGCHVSFLR) the chain is Cytoplasmic. Residues 81 to 102 (ATFYLAAQLLGAVAGAALLHEL) traverse the membrane as a helical segment. Residues 103–109 (TPPDIRG) are Extracellular-facing.

This sequence belongs to the MIP/aquaporin (TC 1.A.8) family. As to quaternary structure, homotetramer. In terms of processing, serine phosphorylation is necessary and sufficient for expression at the apical membrane. Endocytosis is not phosphorylation-dependent. N-glycosylated.

The protein localises to the apical cell membrane. Its subcellular location is the basolateral cell membrane. The protein resides in the cell membrane. It localises to the cytoplasmic vesicle membrane. It is found in the golgi apparatus. The protein localises to the trans-Golgi network membrane. The catalysed reaction is H2O(in) = H2O(out). The enzyme catalyses glycerol(in) = glycerol(out). In terms of biological role, forms a water-specific channel that provides the plasma membranes of renal collecting duct with high permeability to water, thereby permitting water to move in the direction of an osmotic gradient. Plays an essential role in renal water homeostasis. Could also be permeable to glycerol. This is Aquaporin-2 from Elephas maximus (Indian elephant).